Consider the following 279-residue polypeptide: Protease HtpX homolog (279 aa).

Transmembrane regions (helical) follow at residues 4-24 (IFLF…VLAV) and 34-54 (GSLL…SLLM). His140 serves as a coordination point for Zn(2+). Residue Glu141 is part of the active site. His144 provides a ligand contact to Zn(2+). Transmembrane regions (helical) follow at residues 155–175 (LIQG…ANLI) and 189–209 (FLVS…IVMW). Zn(2+) is bound at residue Glu215.

Belongs to the peptidase M48B family. Zn(2+) serves as cofactor.

Its subcellular location is the cell inner membrane. This Neisseria gonorrhoeae (strain ATCC 700825 / FA 1090) protein is Protease HtpX homolog.